A 122-amino-acid chain; its full sequence is Basic phospholipase A2 (122 aa).

Cystine bridges form between cysteine 26–cysteine 115, cysteine 28–cysteine 44, cysteine 43–cysteine 95, cysteine 49–cysteine 122, cysteine 50–cysteine 88, cysteine 57–cysteine 81, and cysteine 75–cysteine 86. 3 residues coordinate Ca(2+): tyrosine 27, glycine 29, and glycine 31. Residue histidine 47 is part of the active site. Position 48 (aspartate 48) interacts with Ca(2+). Aspartate 89 is an active-site residue.

Belongs to the phospholipase A2 family. Group II subfamily. D49 sub-subfamily. Requires Ca(2+) as cofactor. In terms of tissue distribution, expressed by the venom gland.

Its subcellular location is the secreted. It catalyses the reaction a 1,2-diacyl-sn-glycero-3-phosphocholine + H2O = a 1-acyl-sn-glycero-3-phosphocholine + a fatty acid + H(+). In terms of biological role, snake venom phospholipase A2 (PLA2) that does not inhibit platelet aggregation. Exhibits cytotoxic and anticoagulant activity. Induces Ehrlich tumor growth but not angiogenesis. PLA2 catalyzes the calcium-dependent hydrolysis of the 2-acyl groups in 3-sn-phosphoglycerides. In Bothrops leucurus (Whitetail lancehead), this protein is Basic phospholipase A2.